The sequence spans 137 residues: Phosphoribosyl-AMP cyclohydrolase (137 aa).

Residue Asp84 participates in Mg(2+) binding. Cys85 provides a ligand contact to Zn(2+). The Mg(2+) site is built by Asp86 and Asp88. Cys101 and Cys108 together coordinate Zn(2+).

The protein belongs to the PRA-CH family. As to quaternary structure, homodimer. Mg(2+) is required as a cofactor. The cofactor is Zn(2+).

The protein localises to the cytoplasm. The enzyme catalyses 1-(5-phospho-beta-D-ribosyl)-5'-AMP + H2O = 1-(5-phospho-beta-D-ribosyl)-5-[(5-phospho-beta-D-ribosylamino)methylideneamino]imidazole-4-carboxamide. It functions in the pathway amino-acid biosynthesis; L-histidine biosynthesis; L-histidine from 5-phospho-alpha-D-ribose 1-diphosphate: step 3/9. Catalyzes the hydrolysis of the adenine ring of phosphoribosyl-AMP. This is Phosphoribosyl-AMP cyclohydrolase from Chlorobaculum parvum (strain DSM 263 / NCIMB 8327) (Chlorobium vibrioforme subsp. thiosulfatophilum).